We begin with the raw amino-acid sequence, 320 residues long: tRNA(Ile)-lysidine synthase, chloroplastic (320 aa).

31 to 36 (SGGKDS) lines the ATP pocket.

Belongs to the tRNA(Ile)-lysidine synthase family.

It localises to the plastid. The protein localises to the chloroplast. It catalyses the reaction cytidine(34) in tRNA(Ile2) + L-lysine + ATP = lysidine(34) in tRNA(Ile2) + AMP + diphosphate + H(+). Its function is as follows. Ligates lysine onto the cytidine present at position 34 of the AUA codon-specific tRNA(Ile) that contains the anticodon CAU, in an ATP-dependent manner. Cytidine is converted to lysidine, thus changing the amino acid specificity of the tRNA from methionine to isoleucine. The sequence is that of tRNA(Ile)-lysidine synthase, chloroplastic from Gracilaria tenuistipitata var. liui (Red alga).